The chain runs to 406 residues: Tryptophan synthase beta chain (406 aa).

Residue Lys99 is modified to N6-(pyridoxal phosphate)lysine.

This sequence belongs to the TrpB family. As to quaternary structure, tetramer of two alpha and two beta chains. It depends on pyridoxal 5'-phosphate as a cofactor.

It catalyses the reaction (1S,2R)-1-C-(indol-3-yl)glycerol 3-phosphate + L-serine = D-glyceraldehyde 3-phosphate + L-tryptophan + H2O. It participates in amino-acid biosynthesis; L-tryptophan biosynthesis; L-tryptophan from chorismate: step 5/5. Its function is as follows. The beta subunit is responsible for the synthesis of L-tryptophan from indole and L-serine. Essential for production of nod factors and establishment of symbiosis. This chain is Tryptophan synthase beta chain, found in Rhizobium etli (strain ATCC 51251 / DSM 11541 / JCM 21823 / NBRC 15573 / CFN 42).